Consider the following 329-residue polypeptide: Isopenicillin N synthase (329 aa).

The isopenicillin N site is built by Arg87, Tyr91, Ser183, and Tyr189. N-[(5S)-5-amino-5-carboxypentanoyl]-L-cysteinyl-D-valine is bound by residues Arg87, Tyr91, Ser183, Tyr189, His212, and Asp214. A Fe2OG dioxygenase domain is found at 180-286 (SLSSVSLIRY…RLSLPFFLNG (107 aa)). His212, Asp214, and His268 together coordinate Fe(2+). Position 277 (Arg277) interacts with 2-oxoglutarate. Residue Ser279 coordinates isopenicillin N. Ser279 is an N-[(5S)-5-amino-5-carboxypentanoyl]-L-cysteinyl-D-valine binding site.

It belongs to the iron/ascorbate-dependent oxidoreductase family. Fe cation serves as cofactor. Requires L-ascorbate as cofactor.

It catalyses the reaction N-[(5S)-5-amino-5-carboxypentanoyl]-L-cysteinyl-D-valine + O2 = isopenicillin N + 2 H2O. The protein operates within antibiotic biosynthesis; penicillin G biosynthesis; penicillin G from L-alpha-aminoadipate and L-cysteine and L-valine: step 2/3. In terms of biological role, removes, in the presence of oxygen, 4 hydrogen atoms from delta-L-(alpha-aminoadipyl)-L-cysteinyl-D-valine (ACV) to form the azetidinone and thiazolidine rings of isopenicillin. The chain is Isopenicillin N synthase (pcbC) from Streptomyces clavuligerus.